We begin with the raw amino-acid sequence, 345 residues long: 4-hydroxy-2-oxovalerate aldolase 3 (345 aa).

Residues 8-260 (ITVHDMTLRD…ETGVDVWKIQ (253 aa)) enclose the Pyruvate carboxyltransferase domain. 16–17 (RD) provides a ligand contact to substrate. D17 is a Mn(2+) binding site. The active-site Proton acceptor is H20. Substrate is bound by residues S170 and H199. Mn(2+) is bound by residues H199 and H201. Y290 contacts substrate.

Belongs to the 4-hydroxy-2-oxovalerate aldolase family.

The catalysed reaction is (S)-4-hydroxy-2-oxopentanoate = acetaldehyde + pyruvate. This is 4-hydroxy-2-oxovalerate aldolase 3 (aphG) from Comamonas testosteroni (Pseudomonas testosteroni).